Reading from the N-terminus, the 994-residue chain is ASI1-immunoprecipitated protein 2 (994 aa).

Disordered stretches follow at residues 39-182 (AEFS…SGEN) and 187-206 (KADESNTSAMSDSESENDPE). Over residues 45 to 54 (KSDESSDENS) the composition is skewed to basic and acidic residues. A compositionally biased stretch (polar residues) spans 60–102 (SQCSFNGDNLLRSSGVNAPGSSHNTSSEASHLVNSNHDTSSEN). Composition is skewed to basic and acidic residues over residues 119 to 140 (LLDRPHKDQDSMKVDSCNDHQA) and 148 to 163 (KVKEKSGAKNNEEKKN). The PHD-type zinc-finger motif lies at 212–263 (VKVCDTCGDAGREDLLAICSRCSDGAEHTYCMRVMLKKVPKGYWLCEECKFA). The Zn(2+) site is built by Cys-215, Cys-218, Cys-230, Cys-233, His-239, Cys-242, Cys-257, and Cys-260. 2 disordered regions span residues 342-567 (AHYS…NNKG) and 839-875 (CSNPPKNTPLPASCVSPNRDTFRHENPSNKKSLTDRT). The span at 371–384 (SFLKSNSFNSLSSR) shows a compositional bias: low complexity. 2 stretches are compositionally biased toward polar residues: residues 417 to 435 (VGKSMSSRCIDVGSSNCND) and 449 to 464 (TEANPSASISRGNSSI). Composition is skewed to basic and acidic residues over residues 469–478 (SPRDLKDLQS), 536–552 (PRSREFREAGEKTKDAV), and 858–875 (DTFRHENPSNKKSLTDRT).

As to quaternary structure, component of the ASI1-AIPP1-EDM2 (AAE) RNA regulatory complex composed of at least AIPP1/EDM3, ASI1 and EDM2 and may contain CPL2, AIPP2 and AIPP3/BDT1. Part of the BAH-PHD bivalent histone reader complex that contains AIPP2, PAIPP2 and AIPP3/BDT1; the BAH-PHD module associates with CPL2 to form the BAH-PHD-CPL2 complex (BPC) for transcriptional repression. Binds directly to ASI1, AIPP3/BDT1 and CPL2 but not to PAIPP2. Expressed ubiquitously.

Together with AIPP3/BDT1 and PAIPP2, cooperates to form a BAH-PHD bivalent histone reader complex able to read histone H3 lysine 27 trimethylation (H3K27me3) and low-methylated H3K4 histone marks in order to regulate transcription, especially to prevent early flowering; promotes AIPP3/BDT1 binding to H3K27me3. CPL2 is subsequently recruited to form a BAH-PHD-CPL2 complex (BPC) in order to silence several H3K27me3 and low-methylated H3K4 enriched loci, including AGO5, via the phosphorylation state-dependent inhibition of Pol II release from the transcriptional start site (e.g. Ser5P-Pol II dephosphorylation). The BPC complex represses flowering by inhibiting the expression of several genes, including AGL6, FT, FUL and SOC1. Prevents the accumulation of intronic heterochromatin-containing genes (e.g. IBM1, At3g05410 and RPP7). The protein is ASI1-immunoprecipitated protein 2 of Arabidopsis thaliana (Mouse-ear cress).